Here is a 595-residue protein sequence, read N- to C-terminus: uncharacterized protein (595 aa).

Residues methionine 1–cysteine 21 are disordered. WD repeat units follow at residues glutamate 56–lysine 95, alanine 100–phenylalanine 143, glycine 144–serine 184, valine 187–glutamate 226, alanine 229–glutamate 268, glycine 313–leucine 352, serine 356–aspartate 393, lysine 433–valine 472, aspartate 477–serine 516, phenylalanine 520–alanine 559, and histidine 564–threonine 594.

It belongs to the WD repeat AIP1 family.

This is an uncharacterized protein from Schizosaccharomyces pombe (strain 972 / ATCC 24843) (Fission yeast).